The chain runs to 438 residues: Putative pectate lyase 14 (438 aa).

A signal peptide spans 1–26; the sequence is MVVARTLFSISATLIIFLALFLHVNA. N-linked (GlcNAc...) asparagine glycosylation is found at Asn40, Asn46, and Asn73. Residues Asp236, Asp260, and Asp264 each contribute to the Ca(2+) site. Residue Arg316 is part of the active site.

This sequence belongs to the polysaccharide lyase 1 family. Ca(2+) serves as cofactor.

It carries out the reaction Eliminative cleavage of (1-&gt;4)-alpha-D-galacturonan to give oligosaccharides with 4-deoxy-alpha-D-galact-4-enuronosyl groups at their non-reducing ends.. Its pathway is glycan metabolism; pectin degradation; 2-dehydro-3-deoxy-D-gluconate from pectin: step 2/5. The protein is Putative pectate lyase 14 of Arabidopsis thaliana (Mouse-ear cress).